A 248-amino-acid chain; its full sequence is Uracil-DNA glycosylase (248 aa).

Asp85 serves as the catalytic Proton acceptor.

This sequence belongs to the uracil-DNA glycosylase (UDG) superfamily. UNG family.

It localises to the cytoplasm. The catalysed reaction is Hydrolyzes single-stranded DNA or mismatched double-stranded DNA and polynucleotides, releasing free uracil.. Functionally, excises uracil residues from the DNA which can arise as a result of misincorporation of dUMP residues by DNA polymerase or due to deamination of cytosine. The polypeptide is Uracil-DNA glycosylase (Deinococcus deserti (strain DSM 17065 / CIP 109153 / LMG 22923 / VCD115)).